A 546-amino-acid polypeptide reads, in one-letter code: Pyrophosphate--fructose 6-phosphate 1-phosphotransferase (546 aa).

Glycine 80 contacts diphosphate. Aspartate 174 is a binding site for Mg(2+). Residues threonine 202–aspartate 204, lysine 241–tyrosine 242, methionine 249–arginine 251, glutamate 310, and tyrosine 420–arginine 423 each bind substrate. Aspartate 204 serves as the catalytic Proton acceptor.

The protein belongs to the phosphofructokinase type A (PFKA) family. PPi-dependent PFK group II subfamily. Clade 'Long' sub-subfamily. In terms of assembly, homodimer. Requires Mg(2+) as cofactor. The cofactor is Mn(2+).

The protein localises to the cytoplasm. It catalyses the reaction beta-D-fructose 6-phosphate + diphosphate = beta-D-fructose 1,6-bisphosphate + phosphate + H(+). It functions in the pathway carbohydrate degradation; glycolysis; D-glyceraldehyde 3-phosphate and glycerone phosphate from D-glucose: step 3/4. Non-allosteric. Competitively inhibited by PPi, Pi and fructose 1,6-bisphosphate. In terms of biological role, catalyzes the phosphorylation of D-fructose 6-phosphate, the first committing step of glycolysis. Uses inorganic phosphate (PPi) as phosphoryl donor instead of ATP like common ATP-dependent phosphofructokinases (ATP-PFKs), which renders the reaction reversible, and can thus function both in glycolysis and gluconeogenesis. Consistently, PPi-PFK can replace the enzymes of both the forward (ATP-PFK) and reverse (fructose-bisphosphatase (FBPase)) reactions. The chain is Pyrophosphate--fructose 6-phosphate 1-phosphotransferase from Entamoeba histolytica (strain ATCC 30459 / HM-1:IMSS / ABRM).